The primary structure comprises 331 residues: Serpentine receptor class alpha-1 (331 aa).

The next 7 helical transmembrane spans lie at 22–42 (FAVF…VIAV), 57–77 (IILV…AIIS), 104–124 (YTEV…GILI), 143–163 (VGII…QIII), 189–209 (FLFI…AVMF), 238–258 (ICVV…GVLI), and 274–294 (LITW…ILIF).

It belongs to the nematode receptor-like protein sra family.

It is found in the membrane. In Caenorhabditis elegans, this protein is Serpentine receptor class alpha-1 (sra-1).